The primary structure comprises 493 residues: Arginine decarboxylase (493 aa).

N6-(pyridoxal phosphate)lysine is present on K229.

The protein belongs to the Orn/Lys/Arg decarboxylase class-I family. Pyridoxal 5'-phosphate serves as cofactor.

The protein resides in the cytoplasm. It catalyses the reaction L-arginine + H(+) = agmatine + CO2. The protein operates within amine and polyamine biosynthesis; agmatine biosynthesis; agmatine from L-arginine: step 1/1. Functionally, catalyzes the formation of agmatine from arginine. This chain is Arginine decarboxylase (speA), found in Bacillus anthracis.